Here is a 400-residue protein sequence, read N- to C-terminus: MEILVLNLGSSSIKFKLFDMKENKPLASGLIERIGEEVGQLKIQSHLHHDKQEVKKQLFIKDHASGLLMVREHLTKMGIIKDFDKIDAIGHRVVQGGDKFHAPVLVDEKVMQEIERLSILAPLHNPVNLAGIKFVKTAHPHIPQIAVFDTAFHATMPDFAYMYALPYELYEKYQIRRYGFHGTSHHYVAKEAAKYLHIPYHKFNAITLHLGNGASVAAIKDGKSVDTSMGLTPLEGLIMGTRCGDIDPTVVEYIAQCANKSLEEVMKILNYESGLKGICGDNDARNIETRAKKGDKQAKLAFEMCAYRIKKHIGAYMVALGRVDAIIFTGGMGENYPALRESVCEGLEKLGIALHKPTNDNPGSGIVDLSQPNTKIQVLRIPTDEELEIALQTKRVLEKH.

Asparagine 7 is a Mg(2+) binding site. Lysine 14 is an ATP binding site. Residue arginine 92 coordinates substrate. Residue aspartate 149 is the Proton donor/acceptor of the active site. Residues 209–213 (HLGNG), 283–285 (DAR), and 331–335 (GMGEN) each bind ATP. Position 385 (glutamate 385) interacts with Mg(2+).

Belongs to the acetokinase family. Homodimer. Mg(2+) is required as a cofactor. The cofactor is Mn(2+).

The protein resides in the cytoplasm. It carries out the reaction acetate + ATP = acetyl phosphate + ADP. The protein operates within metabolic intermediate biosynthesis; acetyl-CoA biosynthesis; acetyl-CoA from acetate: step 1/2. Functionally, catalyzes the formation of acetyl phosphate from acetate and ATP. Can also catalyze the reverse reaction. This is Acetate kinase from Helicobacter acinonychis (strain Sheeba).